Here is a 732-residue protein sequence, read N- to C-terminus: Coagulation factor XIII A chain (732 aa).

The tract at residues 1–27 is disordered; it reads MSETSRTAFGGRRAVPPNNSNAAEDDL. Position 2 is an N-acetylserine (serine 2). A propeptide spans 2–38 (activation peptide); the sequence is SETSRTAFGGRRAVPPNNSNAAEDDLPTVELQGVVPR. Active-site residues include cysteine 315, histidine 374, and aspartate 397. 4 residues coordinate Ca(2+): asparagine 437, aspartate 439, glutamate 486, and glutamate 491. The N-linked (GlcNAc...) asparagine glycan is linked to asparagine 614.

This sequence belongs to the transglutaminase superfamily. Transglutaminase family. As to quaternary structure, tetramer of two A chains (F13A1) and two B (F13B) chains. It depends on Ca(2+) as a cofactor. The activation peptide is released by thrombin.

Its subcellular location is the cytoplasm. It localises to the secreted. The enzyme catalyses L-glutaminyl-[protein] + L-lysyl-[protein] = [protein]-L-lysyl-N(6)-5-L-glutamyl-[protein] + NH4(+). Factor XIII is activated by thrombin and calcium ion to a transglutaminase that catalyzes the formation of gamma-glutamyl-epsilon-lysine cross-links between fibrin chains, thus stabilizing the fibrin clot. Also cross-link alpha-2-plasmin inhibitor, or fibronectin, to the alpha chains of fibrin. This chain is Coagulation factor XIII A chain (F13A1), found in Homo sapiens (Human).